A 288-amino-acid chain; its full sequence is MAEKKQWHETLHDQFGQYFAVDNVLYHEKTDHQDLIIFENAAFGRVMALDGVVQTTERDEFIYHEMMTHVPLLAHGHAKHVLIIGGGDGAMLREVTRHKNVESITMVEIDAGVVSFCRQYLPNHNAGSYDDLRFKLVIDDGVNFVNQTSQTFDVIISDCTDPIGPGESLFTSAFYEGCKRCLNPGGIFVAQNGVCFLQQEEAIDSHRKLSHYFSDVGFYQAAIPTYYGGIMTFAWATDNDALRHLSTEIIQARFLASGLKCRYYNPAVHTAAFALPQYLQDALAPQPS.

Positions 9–238 (ETLHDQFGQY…GIMTFAWATD (230 aa)) constitute a PABS domain. Q33 lines the S-methyl-5'-thioadenosine pocket. Positions 64 and 88 each coordinate spermidine. S-methyl-5'-thioadenosine-binding positions include E108 and 140–141 (DG). D158 functions as the Proton acceptor in the catalytic mechanism. 158–161 (DCTD) lines the spermidine pocket. Residue P165 participates in S-methyl-5'-thioadenosine binding.

Belongs to the spermidine/spermine synthase family. Homodimer or homotetramer.

The protein resides in the cytoplasm. The enzyme catalyses S-adenosyl 3-(methylsulfanyl)propylamine + putrescine = S-methyl-5'-thioadenosine + spermidine + H(+). Its pathway is amine and polyamine biosynthesis; spermidine biosynthesis; spermidine from putrescine: step 1/1. In terms of biological role, catalyzes the irreversible transfer of a propylamine group from the amino donor S-adenosylmethioninamine (decarboxy-AdoMet) to putrescine (1,4-diaminobutane) to yield spermidine. This is Polyamine aminopropyltransferase from Shigella dysenteriae serotype 1 (strain Sd197).